The sequence spans 221 residues: Imidazoleglycerol-phosphate dehydratase (221 aa).

The protein belongs to the imidazoleglycerol-phosphate dehydratase family.

It catalyses the reaction D-erythro-1-(imidazol-4-yl)glycerol 3-phosphate = 3-(imidazol-4-yl)-2-oxopropyl phosphate + H2O. It participates in amino-acid biosynthesis; L-histidine biosynthesis; L-histidine from 5-phospho-alpha-D-ribose 1-diphosphate: step 6/9. This Kluyveromyces marxianus (Yeast) protein is Imidazoleglycerol-phosphate dehydratase (HIS3).